A 125-amino-acid polypeptide reads, in one-letter code: Large ribosomal subunit protein bL12 (125 aa).

This sequence belongs to the bacterial ribosomal protein bL12 family. Homodimer. Part of the ribosomal stalk of the 50S ribosomal subunit. Forms a multimeric L10(L12)X complex, where L10 forms an elongated spine to which 2 to 4 L12 dimers bind in a sequential fashion. Binds GTP-bound translation factors.

Its function is as follows. Forms part of the ribosomal stalk which helps the ribosome interact with GTP-bound translation factors. Is thus essential for accurate translation. This chain is Large ribosomal subunit protein bL12, found in Azoarcus sp. (strain BH72).